Consider the following 288-residue polypeptide: 4-diphosphocytidyl-2-C-methyl-D-erythritol kinase (288 aa).

Lys-19 is an active-site residue. 102-112 (PMGGGIGGGSS) provides a ligand contact to ATP. Residue Asp-144 is part of the active site.

It belongs to the GHMP kinase family. IspE subfamily.

It catalyses the reaction 4-CDP-2-C-methyl-D-erythritol + ATP = 4-CDP-2-C-methyl-D-erythritol 2-phosphate + ADP + H(+). The protein operates within isoprenoid biosynthesis; isopentenyl diphosphate biosynthesis via DXP pathway; isopentenyl diphosphate from 1-deoxy-D-xylulose 5-phosphate: step 3/6. In terms of biological role, catalyzes the phosphorylation of the position 2 hydroxy group of 4-diphosphocytidyl-2C-methyl-D-erythritol. This Pseudomonas savastanoi pv. phaseolicola (strain 1448A / Race 6) (Pseudomonas syringae pv. phaseolicola (strain 1448A / Race 6)) protein is 4-diphosphocytidyl-2-C-methyl-D-erythritol kinase.